Consider the following 472-residue polypeptide: MDWDLKMPVSWDLAELEHNAVPNMAAAASAAEPGIAAVAASRGAPGRPECSVDLKLGGLGEFGAADALKEPAAAAKAPVSSAAAAASVAKVPPSTSTLKRPRGGGGGGGGQCPSCAVDGCKADLSKHRDYHRRHKVCEPHSKTPVVVVSGREMRFCQQCSRFHLLGEFDEAKRSCRKRLDGHNRRRRKPQADSMSSGSFMTSQQGTRFASFTPPRPEPSWPGIIKSEETPYYSHHHHPHPVMTSRQPHFVGSPSSATTAAFSPKEGRRFPFLHEGDQISFGGGGGAAAAATLEISVCQTTVVAPPPPESSSSNKMFSSDGLTTATTTTTTAHHHHHHHQVLDSDCALSLLSSPANSSSVDVSRMVQPSPAAAAGAEHHHHHQIPMAQPLVPNLQQQFGGSSPWFASSPAAAAVAGGGFACPSMDSEQQQQQQLNAVLVPGSNENEMNYHGMFHVGGEGSSDGTSPSLPFSWQ.

Residues 89 to 110 are disordered; the sequence is AKVPPSTSTLKRPRGGGGGGGG. The SBP-type zinc-finger motif lies at 112-189; it reads CPSCAVDGCK…DGHNRRRRKP (78 aa). Zn(2+)-binding residues include Cys115, Cys120, Cys137, His140, Cys156, Cys159, His163, and Cys175. A Bipartite nuclear localization signal motif is present at residues 172–188; sequence KRSCRKRLDGHNRRRRK. Disordered regions lie at residues 179-218, 233-261, and 358-381; these read LDGHNRRRRKPQADSMSSGSFMTSQQGTRFASFTPPRPEP, SHHHHPHPVMTSRQPHFVGSPSSATTAAF, and SVDVSRMVQPSPAAAAGAEHHHHH. Over residues 192-209 the composition is skewed to polar residues; it reads DSMSSGSFMTSQQGTRFA. Positions 252–261 are enriched in low complexity; the sequence is SPSSATTAAF.

As to expression, expressed in young panicles.

It localises to the nucleus. In terms of biological role, trans-acting factor that binds specifically to the consensus nucleotide sequence 5'-TNCGTACAA-3'. May be involved in panicle development. This Oryza sativa subsp. japonica (Rice) protein is Squamosa promoter-binding-like protein 18 (SPL18).